The primary structure comprises 505 residues: MCPSFLVTLLLLQLSSLVVVLVVWAEQLPEFNVRRDDFPSNFVFGAGTSALQVEGAIAEDGKTPNIWDVDSHMGHMPDKSTTDIACDSYHRYKEDVKIMSDIGLEAYRFSIAWTRILPYGRGFINPKGVEYYNNLIDTLLEHGIQPHATIYHIDHPQILEDEYGGWLSPRMIEDFTTYADVCFREFGDRVSHWTTINEPNIISLGAYDSGQIPPHRCTPPGAYNCTAGNSSVEPYKAMHHFLLAHASAVQIYRTKYQAKQKGLIGLNVYGFWCAPQTNSRADIEATKRATAFYTGWAADPLVFGDYPIIMKENVGSRLPSFTKNESELVKGSFDFIGLNHYFVFYIQDDPEEITTPISLRNFDSDMRVKASVKPGDSGDPSGLKNLLRYFKDNYGNPPVYVHENGFGSPQNETLDDDMGRIRYISGYIGSMLEAIKNGSDTRGYFVWSFMDAFEILSGYQTRYGIVHVDFDDKSLKRQLKPSAQWYSNFIKKKNTTEDEISYSSQ.

An N-terminal signal peptide occupies residues 1 to 25; sequence MCPSFLVTLLLLQLSSLVVVLVVWA. A beta-D-glucoside-binding positions include Gln-52, His-152, and 197–198; that span reads NE. Residue Glu-198 is the Proton donor of the active site. Residues Cys-217 and Cys-225 are joined by a disulfide bond. Residues Asn-224, Asn-229, and Asn-324 are each glycosylated (N-linked (GlcNAc...) asparagine). Residues Tyr-341 and Glu-403 each coordinate a beta-D-glucoside. Residue Glu-403 is the Nucleophile of the active site. 2 N-linked (GlcNAc...) asparagine glycosylation sites follow: Asn-411 and Asn-437. The a beta-D-glucoside site is built by Trp-447 and Tyr-463. N-linked (GlcNAc...) asparagine glycosylation is present at Asn-494.

It belongs to the glycosyl hydrolase 1 family.

It localises to the vacuole. The catalysed reaction is 1-O-(4-hydroxy-3-methoxybenzoyl)-beta-D-glucose + cyanidin 3-O-beta-D-glucoside = cyanidin 3,7-di-O-beta-D-glucoside + vanillate. The protein operates within pigment biosynthesis; anthocyanin biosynthesis. In terms of biological role, beta-glycosidase that catalyzes the transfer of glucose moiety to anthocyanidin 3-glucoside at the 7 position. Anthocyanins are ubiquitous colored pigments that are responsible for variations in petal color. This Delphinium grandiflorum (Siberian larkspur) protein is Cyanidin 3-O-glucoside 7-O-glucosyltransferase (acyl-glucose) (AA7GT).